We begin with the raw amino-acid sequence, 430 residues long: Enolase (430 aa).

Gln-167 serves as a coordination point for (2R)-2-phosphoglycerate. Glu-209 functions as the Proton donor in the catalytic mechanism. 3 residues coordinate Mg(2+): Asp-245, Glu-286, and Asp-313. (2R)-2-phosphoglycerate contacts are provided by Lys-338, Arg-367, Ser-368, and Lys-389. Lys-338 acts as the Proton acceptor in catalysis.

It belongs to the enolase family. It depends on Mg(2+) as a cofactor.

It is found in the cytoplasm. Its subcellular location is the secreted. It localises to the cell surface. The enzyme catalyses (2R)-2-phosphoglycerate = phosphoenolpyruvate + H2O. Its pathway is carbohydrate degradation; glycolysis; pyruvate from D-glyceraldehyde 3-phosphate: step 4/5. In terms of biological role, catalyzes the reversible conversion of 2-phosphoglycerate (2-PG) into phosphoenolpyruvate (PEP). It is essential for the degradation of carbohydrates via glycolysis. In Parasynechococcus marenigrum (strain WH8102), this protein is Enolase.